The sequence spans 260 residues: MFDIGVNLTSPQFARDHDAVVARAFAAGLSGMLLTGTSLHESEQALALAQRHARCWSTAGVHPHDSSRWTRETEQRIRTLAQAPEVVAIGECGLDFNRNFSTPQAQEAAFSAQLALAAECGMPVFLHCRDAHERFMALLTPWLDKLPGAVLHCFTGTRDELQDCLRHGLYIGITGWVCDERRGLALRDMLPLIPANRLMVETDAPYLLPRDMTPKPGSRRNEPAYLAHIMARIAHWRGEDAQWLSGETDNNVRTLFGVAM.

A divalent metal cation contacts are provided by glutamate 91, histidine 127, and histidine 152.

This sequence belongs to the metallo-dependent hydrolases superfamily. TatD-type hydrolase family. TatD subfamily. Monomer. The cofactor is Mg(2+).

The protein localises to the cytoplasm. Its function is as follows. 3'-5' exonuclease that prefers single-stranded DNA and RNA. May play a role in the H(2)O(2)-induced DNA damage repair. This Enterobacter lignolyticus (strain SCF1) protein is 3'-5' ssDNA/RNA exonuclease TatD.